A 363-amino-acid polypeptide reads, in one-letter code: Dihydroorotate dehydrogenase (quinone) (363 aa).

FMN-binding positions include 67–71 (AGLDK) and T91. K71 contacts substrate. Position 116–120 (116–120 (NRMGF)) interacts with substrate. FMN contacts are provided by N145 and N178. Position 178 (N178) interacts with substrate. The active-site Nucleophile is S181. N183 contributes to the substrate binding site. FMN-binding residues include K219 and T247. 248–249 (NT) is a binding site for substrate. Residues G268, G297, and 318 to 319 (YT) each bind FMN.

It belongs to the dihydroorotate dehydrogenase family. Type 2 subfamily. As to quaternary structure, monomer. It depends on FMN as a cofactor.

It is found in the cell membrane. The catalysed reaction is (S)-dihydroorotate + a quinone = orotate + a quinol. The protein operates within pyrimidine metabolism; UMP biosynthesis via de novo pathway; orotate from (S)-dihydroorotate (quinone route): step 1/1. Functionally, catalyzes the conversion of dihydroorotate to orotate with quinone as electron acceptor. This is Dihydroorotate dehydrogenase (quinone) from Myxococcus xanthus (strain DK1622).